A 215-amino-acid chain; its full sequence is uncharacterized protein (215 aa).

Residues Ser114, Asp162, and His194 each act as charge relay system in the active site.

It belongs to the AB hydrolase superfamily. AB hydrolase 2 family.

This is an uncharacterized protein from Rickettsia prowazekii (strain Madrid E).